The chain runs to 2788 residues: Multiple epidermal growth factor-like domains protein 8 (2788 aa).

Positions 1–27 are cleaved as a signal peptide; the sequence is MALGGALAAALALAFAVLGPLSHKVLA. Residues 28–2590 are Extracellular-facing; it reads GDCKGQRQVL…FFRQDQAHID (2563 aa). Intrachain disulfides connect C30–C57, C142–C152, C146–C158, C174–C184, C178–C191, and C193–C202. Residues 30–140 form the CUB 1 domain; the sequence is CKGQRQVLRE…LGFNASFRFS (111 aa). A glycan (N-linked (GlcNAc...) asparagine) is linked at N50. 2 consecutive EGF-like domains span residues 138-168 and 170-203; these read RFSLCPGGCQNHGQCKSPGVCVCEPGWGGPD and GLQECSAYCGSHGTCASTLGPCRCEPGFLGRACD. 6 Kelch repeats span residues 241 to 287, 290 to 338, 346 to 399, 402 to 453, 459 to 511, and 525 to 575; these read LLAV…AVAW, FLVL…AGHA, WLYV…FHAP, TLLV…FHTA, YMVV…APPS, and VLLV…SRDP. PSI domains follow at residues 561-613, 847-899, and 900-947; these read YCSM…SDCQ, ACSS…ALCP, and LCEE…EECP. N1048 carries N-linked (GlcNAc...) asparagine glycosylation. One can recognise an EGF-like 3; calcium-binding domain in the interval 1074-1115; sequence DVDECRLGLARCHPRATCLNTPLSYECHCQRGYQGDGITHCN. 16 cysteine pairs are disulfide-bonded: C1078–C1091, C1085–C1100, C1102–C1114, C1163–C1171, C1165–C1179, C1182–C1191, C1194–C1208, C1211–C1224, C1213–C1231, C1233–C1242, C1245–C1259, C1263–C1302, C1336–C1367, C1407–C1421, C1415–C1433, and C1435–C1444. Laminin EGF-like domains are found at residues 1163–1210 and 1211–1261; these read CGCN…GCRP and CQCN…SCFR. Positions 1263–1405 constitute a CUB 2 domain; the sequence is CGGRALLTNV…WGFNASVGSA (143 aa). The N-linked (GlcNAc...) asparagine glycan is linked to N1271. At T1353 the chain carries Phosphothreonine. The EGF-like 4 domain occupies 1403–1445; it reads GSARCGSGGPGSCPVPQECVPQDGAAGAGLCRCPQGWAGPHCR. Kelch repeat units lie at residues 1522–1570, 1580–1626, 1632–1678, 1684–1734, 1739–1786, and 1795–1840; these read TLWM…SFHA, AMYL…HTLT, SLLL…SAVY, SLYV…HASA, TMVV…ESVA, and RLYI…WCHG. 4 consecutive PSI domains span residues 1819–1859, 1867–1922, 2003–2061, and 2063–2120; these read PCRL…PPCS, ECRR…NDCR, PCHL…ESCS, and GCAQ…LSCP. A glycan (N-linked (GlcNAc...) asparagine) is linked at N2009. The 39-residue stretch at 2121 to 2159 folds into the EGF-like 5 domain; sequence PEDECANGHHDCNETQNCHDQPHGYECSCKTGYTMDNVT. 2 cysteine pairs are disulfide-bonded: C2125/C2138 and C2132/C2147. Residues N2157 and N2172 are each glycosylated (N-linked (GlcNAc...) asparagine). 4 cysteine pairs are disulfide-bonded: C2196-C2204, C2198-C2213, C2216-C2225, and C2228-C2242. Laminin EGF-like domains lie at 2196-2244 and 2323-2386; these read CRCN…TCRP and CQCN…QCYR. Positions 2465–2507 are disordered; the sequence is HTVHIQPPPPPPPPPPPADGVPRVASDLGGLGTGSGSGSPVEP. The span at 2470-2483 shows a compositional bias: pro residues; the sequence is QPPPPPPPPPPPAD. Residues 2591–2611 traverse the membrane as a helical segment; it reads LFVFFSVFFSCFFLFLSLCVL. The Cytoplasmic segment spans residues 2612–2788; the sequence is LWKAKQALDQ…SQDNLTSMSL (177 aa). Positions 2761–2775 are enriched in gly residues; the sequence is GGAGGSGHGGGGGRK. The interval 2761-2788 is disordered; the sequence is GGAGGSGHGGGGGRKGLLSQDNLTSMSL. Residues 2779 to 2788 show a composition bias toward polar residues; sequence SQDNLTSMSL.

As to expression, expressed in brain.

The protein localises to the membrane. Its function is as follows. Acts as a negative regulator of hedgehog signaling. This chain is Multiple epidermal growth factor-like domains protein 8 (Megf8), found in Rattus norvegicus (Rat).